Reading from the N-terminus, the 224-residue chain is Response regulator protein GraR (224 aa).

Positions 2-115 (QILLVEDDNT…VLIAKLQAIY (114 aa)) constitute a Response regulatory domain. 4-aspartylphosphate is present on Asp51. The ompR/PhoB-type DNA-binding region spans 126–224 (KRTLSWQDAT…KVGKGYLAHE (99 aa)).

In terms of processing, phosphorylated by GraS.

The protein resides in the cytoplasm. Member of the two-component regulatory system GraR/GraS involved in resistance against cationic antimicrobial peptides (CAMPs). This Staphylococcus epidermidis (strain ATCC 35984 / DSM 28319 / BCRC 17069 / CCUG 31568 / BM 3577 / RP62A) protein is Response regulator protein GraR (graR).